The following is a 252-amino-acid chain: Aliphatic sulfonates import ATP-binding protein SsuB 1 (252 aa).

Residues 6–234 (LQLHIAGKRF…PRDRQAHEAA (229 aa)) enclose the ABC transporter domain. ATP is bound at residue 38-45 (GASGCGKS).

This sequence belongs to the ABC transporter superfamily. Aliphatic sulfonates importer (TC 3.A.1.17.2) family. As to quaternary structure, the complex is composed of two ATP-binding proteins (SsuB), two transmembrane proteins (SsuC) and a solute-binding protein (SsuA).

The protein localises to the cell inner membrane. The enzyme catalyses ATP + H2O + aliphatic sulfonate-[sulfonate-binding protein]Side 1 = ADP + phosphate + aliphatic sulfonateSide 2 + [sulfonate-binding protein]Side 1.. Its function is as follows. Part of the ABC transporter complex SsuABC involved in aliphatic sulfonates import. Responsible for energy coupling to the transport system. This is Aliphatic sulfonates import ATP-binding protein SsuB 1 from Xanthomonas axonopodis pv. citri (strain 306).